A 343-amino-acid chain; its full sequence is ELAV-like protein 3 (343 aa).

3 consecutive RRM domains span residues 35-113, 121-202, and 260-338; these read TNLI…YARP, ANLY…FANN, and WCIF…FKTS.

The protein belongs to the RRM elav family.

RNA-binding protein that binds to AU-rich sequences (AREs) of target mRNAs. May also bind poly-A tracts via RRM 3. May be involved in neuronal differentiation and maintenance. The protein is ELAV-like protein 3 of Xenopus tropicalis (Western clawed frog).